Reading from the N-terminus, the 268-residue chain is MRLVVVGANGRMGRELITACQNREDIELSGVLVREKSPFVGQDVSILIGSAPLGIRITDDPENAFSNADGIVDFSQPQASVIHADYAAQKGLVHIIGTTGFSKEEDAQIAISATRTTIVKSENMSLGVNLLANFVKKAAKALGAHDFDIEICEMHHSKKVDAPSGTALLLGNAAAEGRHVALKEVSASGRNGYTGERKKGTIGFACLRGGTVIGDHSVIFAGLNERITFSHSAQERSIFAHGALKAALWAKNYKNGLYSMLDVLELNN.

7-12 (GANGRM) contributes to the NAD(+) binding site. R34 serves as a coordination point for NADP(+). NAD(+) is bound by residues 97–99 (GTT) and 121–124 (SENM). H155 functions as the Proton donor/acceptor in the catalytic mechanism. H156 contacts (S)-2,3,4,5-tetrahydrodipicolinate. The active-site Proton donor is the K159. 165–166 (GT) is a binding site for (S)-2,3,4,5-tetrahydrodipicolinate.

Belongs to the DapB family.

It localises to the cytoplasm. The catalysed reaction is (S)-2,3,4,5-tetrahydrodipicolinate + NAD(+) + H2O = (2S,4S)-4-hydroxy-2,3,4,5-tetrahydrodipicolinate + NADH + H(+). It catalyses the reaction (S)-2,3,4,5-tetrahydrodipicolinate + NADP(+) + H2O = (2S,4S)-4-hydroxy-2,3,4,5-tetrahydrodipicolinate + NADPH + H(+). It participates in amino-acid biosynthesis; L-lysine biosynthesis via DAP pathway; (S)-tetrahydrodipicolinate from L-aspartate: step 4/4. In terms of biological role, catalyzes the conversion of 4-hydroxy-tetrahydrodipicolinate (HTPA) to tetrahydrodipicolinate. The protein is 4-hydroxy-tetrahydrodipicolinate reductase of Bartonella bacilliformis (strain ATCC 35685 / KC583 / Herrer 020/F12,63).